We begin with the raw amino-acid sequence, 739 residues long: Copalyl diphosphate synthase 1 (739 aa).

Lys154 provides a ligand contact to substrate. Mg(2+) contacts are provided by Asp287 and Asp289. The DXDD motif signature appears at Asp287–Asp290. Residue Lys373 coordinates substrate.

Belongs to the terpene synthase family. Mg(2+) is required as a cofactor.

It carries out the reaction (2E,6E,10E)-geranylgeranyl diphosphate = (+)-copalyl diphosphate. The protein operates within secondary metabolite biosynthesis; terpenoid biosynthesis. In terms of biological role, monofunctional diterpene synthase converting geranylgeranyl diphosphate to copalyl diphosphate. This is Copalyl diphosphate synthase 1 (CPS1) from Selaginella moellendorffii (Spikemoss).